A 258-amino-acid chain; its full sequence is Hydroxyacylglutathione hydrolase (258 aa).

The Zn(2+) site is built by H56, H58, D60, H61, H112, D132, and H170.

The protein belongs to the metallo-beta-lactamase superfamily. Glyoxalase II family. In terms of assembly, monomer. Zn(2+) is required as a cofactor.

The enzyme catalyses an S-(2-hydroxyacyl)glutathione + H2O = a 2-hydroxy carboxylate + glutathione + H(+). It participates in secondary metabolite metabolism; methylglyoxal degradation; (R)-lactate from methylglyoxal: step 2/2. Functionally, thiolesterase that catalyzes the hydrolysis of S-D-lactoyl-glutathione to form glutathione and D-lactic acid. The sequence is that of Hydroxyacylglutathione hydrolase from Pseudomonas paraeruginosa (strain DSM 24068 / PA7) (Pseudomonas aeruginosa (strain PA7)).